A 196-amino-acid polypeptide reads, in one-letter code: Small ribosomal subunit protein uS4c (196 aa).

The segment at 16–36 (GALPGLTRKTPKSGSNLKKKF) is disordered. Residues 89 to 169 (MRLDNILFRL…LPKHLTIDTL (81 aa)) enclose the S4 RNA-binding domain.

It belongs to the universal ribosomal protein uS4 family. Part of the 30S ribosomal subunit. Contacts protein S5. The interaction surface between S4 and S5 is involved in control of translational fidelity.

The protein resides in the plastid. It localises to the chloroplast. Functionally, one of the primary rRNA binding proteins, it binds directly to 16S rRNA where it nucleates assembly of the body of the 30S subunit. In terms of biological role, with S5 and S12 plays an important role in translational accuracy. This Brachypodium pinnatum (Tor grass) protein is Small ribosomal subunit protein uS4c (rps4).